The sequence spans 183 residues: UPF0397 protein PBPRA2239 (183 aa).

5 helical membrane passes run 8 to 28 (VVLIAIGAALYGIGGLPMFGI), 41 to 61 (AVLALFSVLFGPLVGFLVGFI), 69 to 89 (FAGWGVWLTWVLGSGLVGLII), 110 to 130 (FALFVFLAFLGNVIGYGCSAY), and 147 to 167 (LIIIAAGNTLLIAIVGHYILT).

Belongs to the UPF0397 family.

The protein localises to the cell membrane. The sequence is that of UPF0397 protein PBPRA2239 from Photobacterium profundum (strain SS9).